A 969-amino-acid chain; its full sequence is RNA polymerase-associated protein RapA (969 aa).

The Helicase ATP-binding domain maps to 164–334 (EVGRRHAPRV…FARLRLLDSD (171 aa)). 177–184 (DEVGLGKT) contributes to the ATP binding site. Positions 280-283 (DEAH) match the DEAH box motif. The region spanning 492 to 668 (RVNWLLEKLK…GSNEALDDVI (177 aa)) is the Helicase C-terminal domain.

Belongs to the SNF2/RAD54 helicase family. RapA subfamily. In terms of assembly, interacts with the RNAP. Has a higher affinity for the core RNAP than for the holoenzyme. Its ATPase activity is stimulated by binding to RNAP.

Its function is as follows. Transcription regulator that activates transcription by stimulating RNA polymerase (RNAP) recycling in case of stress conditions such as supercoiled DNA or high salt concentrations. Probably acts by releasing the RNAP, when it is trapped or immobilized on tightly supercoiled DNA. Does not activate transcription on linear DNA. Probably not involved in DNA repair. In Vibrio vulnificus (strain CMCP6), this protein is RNA polymerase-associated protein RapA.